Reading from the N-terminus, the 426-residue chain is MIQERADIEKAYASNLRKFAARLEMFLRTGVEYGTATNILSGLAKEAEDNAELHSNIAAGLINPVQLGIKNWQRENFHKSSISTSIKEVKNFDSEFENAQKTWYKHYKNVNRCKKEYFHACKTVRSLQVQVQNAKNEPFGTPEQLRKIEDKLRKGIMEEEKTRKAYEEALSSLSDVTPRYIEDMTQVFNKAQAFERERIIYFKEQALQMQEVLDISAKPNLSQIFVGLRETVAKVDADADLKKWSLAYGVDMAPNFPVFQEYSPEMSALGKKGRSALADGSSGGVTLTSLKTITSPDRGGPIPGTTDSGSNISTSPVHTTAYGSNSYDHGSEGATPSDYTSSVNGAAAAISKEKQRVEDTPPYPDFVDDGRPGVPIRALYDYVGVEADELSFNSGDLFEKLEDEDEQGWCKGRKDGRVGLYPRQLR.

One can recognise an F-BAR domain in the interval 1 to 240 (MIQERADIEK…TVAKVDADAD (240 aa)). 2 disordered regions span residues 287–315 (LTSLKTITSPDRGGPIPGTTDSGSNISTS) and 350–369 (ISKEKQRVEDTPPYPDFVDD). Residues 305 to 315 (TTDSGSNISTS) show a composition bias toward polar residues. Residues 371–426 (RPGVPIRALYDYVGVEADELSFNSGDLFEKLEDEDEQGWCKGRKDGRVGLYPRQLR) form the SH3 domain.

The sequence is that of Antigen EM13 (EM13) from Echinococcus multilocularis (Fox tapeworm).